The following is a 327-amino-acid chain: Beta-ketoacyl-[acyl-carrier-protein] synthase III 2 (327 aa).

Residues Cys114 and His251 contribute to the active site. The tract at residues 252 to 256 is ACP-binding; the sequence is SANLR. Asn281 is a catalytic residue.

It belongs to the thiolase-like superfamily. FabH family. In terms of assembly, homodimer.

Its subcellular location is the cytoplasm. It catalyses the reaction malonyl-[ACP] + acetyl-CoA + H(+) = 3-oxobutanoyl-[ACP] + CO2 + CoA. It functions in the pathway lipid metabolism; fatty acid biosynthesis. Catalyzes the condensation reaction of fatty acid synthesis by the addition to an acyl acceptor of two carbons from malonyl-ACP. Catalyzes the first condensation reaction which initiates fatty acid synthesis and may therefore play a role in governing the total rate of fatty acid production. Possesses both acetoacetyl-ACP synthase and acetyl transacylase activities. Its substrate specificity determines the biosynthesis of branched-chain and/or straight-chain of fatty acids. This is Beta-ketoacyl-[acyl-carrier-protein] synthase III 2 from Bacillus anthracis.